The sequence spans 240 residues: Uridylate cyclase (240 aa).

Positions 45-180 (TYLYADMANS…RAPNLAAKLS (136 aa)) constitute a Guanylate cyclase domain. A ribonucleoside 5'-triphosphate is bound at residue Tyr-48. Mn(2+)-binding residues include Asp-50 and Asp-94. Residue Arg-95 coordinates a ribonucleoside 5'-triphosphate.

The protein belongs to the adenylyl cyclase class-4/guanylyl cyclase family. Pyrimidine cyclase subfamily. In terms of assembly, homodimer. Requires Mn(2+) as cofactor.

It is found in the cytoplasm. It catalyses the reaction UTP = 3',5'-cyclic UMP + diphosphate. Its function is as follows. Pycsar (pyrimidine cyclase system for antiphage resistance) provides immunity against bacteriophage. The pyrimidine cyclase (PycC) synthesizes cyclic nucleotides in response to infection; these serve as specific second messenger signals. The signals activate the adjacent effector, leading to bacterial cell death and abortive phage infection. A clade B Pycsar system. In terms of biological role, the pyrimidine cyclase gene of a two-gene Pycsar system, weakly generates cyclic UMP (cUMP) from UTP, has little to no activity on ATP, CTP or GTP. Expression of this and adjacent effector RsmPycTM (AC A0A1V0HUU2) probably confers resistance to bacteriophage. The genes are probably only expressed in response to bacteriophage infection. The sequence is that of Uridylate cyclase from Rhodovulum sp. (strain MB263).